A 465-amino-acid polypeptide reads, in one-letter code: Argininosuccinate lyase (465 aa).

Belongs to the lyase 1 family. Argininosuccinate lyase subfamily.

The protein localises to the cytoplasm. The enzyme catalyses 2-(N(omega)-L-arginino)succinate = fumarate + L-arginine. It functions in the pathway amino-acid biosynthesis; L-arginine biosynthesis; L-arginine from L-ornithine and carbamoyl phosphate: step 3/3. The polypeptide is Argininosuccinate lyase (Aromatoleum aromaticum (strain DSM 19018 / LMG 30748 / EbN1) (Azoarcus sp. (strain EbN1))).